The chain runs to 57 residues: Aminopeptidase A (57 aa).

Topologically, residues 1 to 57 (YLTDHYFKVDLNSTVTQQRFLLDPSELAGITIMQPSDSNIEWLKQYRDDVATWLENS) are extracellular. The N-linked (GlcNAc...) asparagine glycan is linked to asparagine 12.

Belongs to the peptidase M1 family. Homodimer; disulfide-linked. The cofactor is Zn(2+).

It localises to the cell membrane. The enzyme catalyses Release of N-terminal glutamate (and to a lesser extent aspartate) from a peptide.. Inhibited by the aminopeptidase competitive inhibitors amastatin (Leu and acidic inhibitor), and bestatin (Leu inhibitor), by chelating agents EDTA, and 1,10-Phenanthroline, as well as by Zn(2+) ions. Substrate specificity is modulated by Ca(2+), Ba(2+), and Mn(2+) ions which enhances the enzymatic activity for cleavage of acidic residues. Venom protein that cleaves N-terminal acidic residues from peptides with high potency in presence of calcium. It may have several roles in venom including alteration of blood pressure by cleaving circulating angiotensin-2, general degradation of host tissue, increase of permeability to other venom components, and/or processing of other toxins in the venom. The sequence is that of Aminopeptidase A from Gloydius blomhoffii (Mamushi).